The primary structure comprises 219 residues: Ribose-5-phosphate isomerase A (219 aa).

Residues 28-31, 81-84, and 94-97 each bind substrate; these read TGST, DGAD, and KGGG. Catalysis depends on glutamate 103, which acts as the Proton acceptor. Position 121 (lysine 121) interacts with substrate.

It belongs to the ribose 5-phosphate isomerase family. In terms of assembly, homodimer.

The enzyme catalyses aldehydo-D-ribose 5-phosphate = D-ribulose 5-phosphate. It functions in the pathway carbohydrate degradation; pentose phosphate pathway; D-ribose 5-phosphate from D-ribulose 5-phosphate (non-oxidative stage): step 1/1. Its function is as follows. Catalyzes the reversible conversion of ribose-5-phosphate to ribulose 5-phosphate. In Shewanella pealeana (strain ATCC 700345 / ANG-SQ1), this protein is Ribose-5-phosphate isomerase A.